A 206-amino-acid chain; its full sequence is Protein VEL1 (206 aa).

The N-terminal stretch at 1–19 (MSFLSIFTFFSVLISVATT) is a signal peptide. 5 N-linked (GlcNAc...) asparagine glycosylation sites follow: Asn26, Asn48, Asn91, Asn139, and Asn152.

This sequence belongs to the VEL1 family. In terms of processing, N-glycosylated.

Its subcellular location is the cytoplasm. It localises to the cytosol. The sequence is that of Protein VEL1 (VEL1) from Saccharomyces cerevisiae (strain ATCC 204508 / S288c) (Baker's yeast).